A 909-amino-acid chain; its full sequence is Phosphoenolpyruvate carboxylase (909 aa).

Active-site residues include His-138 and Lys-572.

It belongs to the PEPCase type 1 family. Mg(2+) is required as a cofactor.

It carries out the reaction oxaloacetate + phosphate = phosphoenolpyruvate + hydrogencarbonate. Functionally, forms oxaloacetate, a four-carbon dicarboxylic acid source for the tricarboxylic acid cycle. This is Phosphoenolpyruvate carboxylase from Lactobacillus delbrueckii subsp. bulgaricus (strain ATCC 11842 / DSM 20081 / BCRC 10696 / JCM 1002 / NBRC 13953 / NCIMB 11778 / NCTC 12712 / WDCM 00102 / Lb 14).